A 384-amino-acid polypeptide reads, in one-letter code: Putative sarcosine oxidase (384 aa).

6–36 provides a ligand contact to FAD; that stretch reads DVVVVGAGIFGSCTAYNCQKIGLKTLLLEQF. Cys315 is modified (S-8alpha-FAD cysteine).

This sequence belongs to the MSOX/MTOX family. Requires FAD as cofactor.

It carries out the reaction sarcosine + O2 + H2O = formaldehyde + glycine + H2O2. The sequence is that of Putative sarcosine oxidase from Caenorhabditis elegans.